The following is a 393-amino-acid chain: HORMA domain-containing protein 1 (393 aa).

In terms of domain architecture, HORMA spans 24 to 226; it reads QQSLVLVKRL…TPFHTFKVKV (203 aa). The tract at residues 322–393 is disordered; it reads SKTSELDVSE…RKFSEPKERI (72 aa). The span at 352–361 shows a compositional bias: basic and acidic residues; that stretch reads KSKENRKRTQ. Serine 375 carries the phosphoserine modification. Residues 382–385 carry the Nuclear localization signal motif; it reads KRRK.

As to quaternary structure, interacts with HORMAD2. Interacts with IHO1. In terms of processing, phosphorylated at Ser-376 in a SPO11-dependent manner.

The protein resides in the nucleus. The protein localises to the chromosome. In terms of biological role, plays a key role in meiotic progression. Regulates 3 different functions during meiosis: ensures that sufficient numbers of processed DNA double-strand breaks (DSBs) are available for successful homology search by increasing the steady-state numbers of single-stranded DSB ends. Promotes synaptonemal-complex formation independently of its role in homology search. Plays a key role in the male mid-pachytene checkpoint and the female meiotic prophase checkpoint: required for efficient build-up of ATR activity on unsynapsed chromosome regions, a process believed to form the basis of meiotic silencing of unsynapsed chromatin (MSUC) and meiotic prophase quality control in both sexes. This is HORMA domain-containing protein 1 (HORMAD1) from Bos taurus (Bovine).